A 164-amino-acid chain; its full sequence is Putative 4-hydroxy-4-methyl-2-oxoglutarate aldolase (164 aa).

Residues 80 to 83 (GGNL) and Arg102 each bind substrate. Position 103 (Asp103) interacts with a divalent metal cation.

This sequence belongs to the class II aldolase/RraA-like family. As to quaternary structure, homotrimer. A divalent metal cation is required as a cofactor.

It catalyses the reaction 4-hydroxy-4-methyl-2-oxoglutarate = 2 pyruvate. The enzyme catalyses oxaloacetate + H(+) = pyruvate + CO2. Catalyzes the aldol cleavage of 4-hydroxy-4-methyl-2-oxoglutarate (HMG) into 2 molecules of pyruvate. Also contains a secondary oxaloacetate (OAA) decarboxylase activity due to the common pyruvate enolate transition state formed following C-C bond cleavage in the retro-aldol and decarboxylation reactions. In Paraburkholderia phymatum (strain DSM 17167 / CIP 108236 / LMG 21445 / STM815) (Burkholderia phymatum), this protein is Putative 4-hydroxy-4-methyl-2-oxoglutarate aldolase.